The primary structure comprises 224 residues: Pyridoxine/pyridoxamine 5'-phosphate oxidase (224 aa).

Residues 19-22 and lysine 81 each bind substrate; that span reads RGEY. Residues 76 to 81, 91 to 92, lysine 98, and glutamine 120 contribute to the FMN site; these read RSVLCK and FT. 2 residues coordinate substrate: tyrosine 138 and arginine 142. Residues 155 to 156 and tryptophan 201 contribute to the FMN site; that span reads QS. Residue 207 to 209 participates in substrate binding; the sequence is RMH. FMN is bound at residue arginine 211.

Belongs to the pyridoxamine 5'-phosphate oxidase family. Homodimer. It depends on FMN as a cofactor.

It catalyses the reaction pyridoxamine 5'-phosphate + O2 + H2O = pyridoxal 5'-phosphate + H2O2 + NH4(+). The catalysed reaction is pyridoxine 5'-phosphate + O2 = pyridoxal 5'-phosphate + H2O2. It functions in the pathway cofactor metabolism; pyridoxal 5'-phosphate salvage; pyridoxal 5'-phosphate from pyridoxamine 5'-phosphate: step 1/1. Its pathway is cofactor metabolism; pyridoxal 5'-phosphate salvage; pyridoxal 5'-phosphate from pyridoxine 5'-phosphate: step 1/1. Catalyzes the oxidation of either pyridoxine 5'-phosphate (PNP) or pyridoxamine 5'-phosphate (PMP) into pyridoxal 5'-phosphate (PLP). The polypeptide is Pyridoxine/pyridoxamine 5'-phosphate oxidase (Mycobacterium bovis (strain ATCC BAA-935 / AF2122/97)).